A 408-amino-acid chain; its full sequence is LL-diaminopimelate aminotransferase (408 aa).

Tyr15 and Gly42 together coordinate substrate. Residues Tyr72, Ser108–Lys109, Tyr132, Asn187, Tyr218, and Ser246–Ser248 each bind pyridoxal 5'-phosphate. Positions 109, 132, and 187 each coordinate substrate. Position 249 is an N6-(pyridoxal phosphate)lysine (Lys249). Pyridoxal 5'-phosphate-binding residues include Arg257 and Asn292. The substrate site is built by Asn292 and Arg388.

It belongs to the class-I pyridoxal-phosphate-dependent aminotransferase family. LL-diaminopimelate aminotransferase subfamily. In terms of assembly, homodimer. Pyridoxal 5'-phosphate serves as cofactor.

The catalysed reaction is (2S,6S)-2,6-diaminopimelate + 2-oxoglutarate = (S)-2,3,4,5-tetrahydrodipicolinate + L-glutamate + H2O + H(+). Its pathway is amino-acid biosynthesis; L-lysine biosynthesis via DAP pathway; LL-2,6-diaminopimelate from (S)-tetrahydrodipicolinate (aminotransferase route): step 1/1. Its function is as follows. Involved in the synthesis of meso-diaminopimelate (m-DAP or DL-DAP), required for both lysine and peptidoglycan biosynthesis. Catalyzes the direct conversion of tetrahydrodipicolinate to LL-diaminopimelate. The protein is LL-diaminopimelate aminotransferase of Leptospira borgpetersenii serovar Hardjo-bovis (strain L550).